The following is a 204-amino-acid chain: Thymidylate kinase (204 aa).

Residue 11–18 (GLDKSGKT) participates in ATP binding.

This sequence belongs to the thymidylate kinase family.

The enzyme catalyses dTMP + ATP = dTDP + ADP. The protein operates within pyrimidine metabolism; dTTP biosynthesis. The polypeptide is Thymidylate kinase (TMK) (Rabbitpox virus (strain Utrecht) (RPV)).